Here is a 426-residue protein sequence, read N- to C-terminus: Histidine--tRNA ligase 1 (426 aa).

It belongs to the class-II aminoacyl-tRNA synthetase family. In terms of assembly, homodimer.

Its subcellular location is the cytoplasm. It carries out the reaction tRNA(His) + L-histidine + ATP = L-histidyl-tRNA(His) + AMP + diphosphate + H(+). The protein is Histidine--tRNA ligase 1 of Bacillus cereus (strain ATCC 14579 / DSM 31 / CCUG 7414 / JCM 2152 / NBRC 15305 / NCIMB 9373 / NCTC 2599 / NRRL B-3711).